The sequence spans 396 residues: Acetate kinase (396 aa).

Position 7 (N7) interacts with Mg(2+). K14 contacts ATP. R91 is a substrate binding site. The active-site Proton donor/acceptor is the D148. ATP contacts are provided by residues 208–212, 283–285, and 331–335; these read HLGNG, DFR, and GIGEN. Mg(2+) is bound at residue E384.

It belongs to the acetokinase family. As to quaternary structure, homodimer. It depends on Mg(2+) as a cofactor. Requires Mn(2+) as cofactor.

The protein resides in the cytoplasm. It catalyses the reaction acetate + ATP = acetyl phosphate + ADP. It participates in metabolic intermediate biosynthesis; acetyl-CoA biosynthesis; acetyl-CoA from acetate: step 1/2. In terms of biological role, catalyzes the formation of acetyl phosphate from acetate and ATP. Can also catalyze the reverse reaction. This chain is Acetate kinase, found in Desulforamulus reducens (strain ATCC BAA-1160 / DSM 100696 / MI-1) (Desulfotomaculum reducens).